Consider the following 1706-residue polypeptide: Histone acetyltransferase HAC12 (1706 aa).

4 disordered regions span residues 1 to 33 (MNVQAHMSGQRSGQVPNQGTVPQNNGNSQMQNL), 251 to 284 (TNNNSGGFSAEPTIVPQSQQQQQRQHTGGQNSHM), 397 to 456 (VSRV…LGKT), and 524 to 543 (QNSQQIQQMMHPQNIGSDSS). A compositionally biased stretch (polar residues) spans 397 to 406 (VSRVNSSLSH). Low complexity predominate over residues 407-434 (QQQFQQPPNRFQQQPNQIQQQQQQFLNQ). The segment at 637–716 (HDPKFKNQQR…DPRCPVCVPV (80 aa)) adopts a TAZ-type 1 zinc-finger fold. The tract at residues 791 to 909 (TESCKSSIVS…PELTSKSRKP (119 aa)) is disordered. Positions 794–805 (CKSSIVSTTEAD) are enriched in polar residues. Composition is skewed to basic and acidic residues over residues 809–829 (DAERKDHRPLKSETMEVKVEI) and 870–896 (PKQENIKMKKEPGWPKKEPGCPKKEEL). The segment at 998–1075 (HYFCIPCYNE…EYTCPYCYVI (78 aa)) adopts a PHD-type zinc-finger fold. Residues 1090 to 1526 (VLGAKDLPRT…VLYHLHNPTA (437 aa)) enclose the CBP/p300-type HAT domain. Residues 1213–1215 (LDS), 1232–1233 (RT), and W1288 contribute to the acetyl-CoA site. ZZ-type zinc fingers lie at residues 1408–1471 (HLQH…IADI) and 1528–1581 (AFVT…SLAD). Zn(2+) is bound by residues C1413, C1416, C1428, C1431, C1437, C1440, H1453, H1461, C1533, C1536, C1548, C1551, C1557, C1560, H1569, and H1571. A TAZ-type 2 zinc finger spans residues 1588–1671 (EARQLRVLQL…ECDVPRCGDL (84 aa)).

The protein localises to the nucleus. It carries out the reaction L-lysyl-[protein] + acetyl-CoA = N(6)-acetyl-L-lysyl-[protein] + CoA + H(+). Its function is as follows. Acetyltransferase enzyme. Acetylates histones, giving a specific tag for transcriptional activation. The sequence is that of Histone acetyltransferase HAC12 (HAC12) from Arabidopsis thaliana (Mouse-ear cress).